We begin with the raw amino-acid sequence, 388 residues long: tRNA (guanine(26)-N(2))-dimethyltransferase (388 aa).

The Trm1 methyltransferase domain occupies 4 to 383; that stretch reads RTIVEGTTKI…APIAEIKKII (380 aa). S-adenosyl-L-methionine is bound by residues Arg-41, Arg-78, Asp-94, and Ala-123. Zn(2+) is bound by residues Cys-251, Cys-254, Cys-271, and Cys-274.

It belongs to the class I-like SAM-binding methyltransferase superfamily. Trm1 family.

It catalyses the reaction guanosine(26) in tRNA + 2 S-adenosyl-L-methionine = N(2)-dimethylguanosine(26) in tRNA + 2 S-adenosyl-L-homocysteine + 2 H(+). Its function is as follows. Dimethylates a single guanine residue at position 26 of a number of tRNAs using S-adenosyl-L-methionine as donor of the methyl groups. The protein is tRNA (guanine(26)-N(2))-dimethyltransferase of Methanosarcina mazei (strain ATCC BAA-159 / DSM 3647 / Goe1 / Go1 / JCM 11833 / OCM 88) (Methanosarcina frisia).